Consider the following 316-residue polypeptide: Taste receptor type 2 member 3 (316 aa).

Residues 1–6 (MMGLTE) lie on the Extracellular side of the membrane. Residues 7–27 (GVFLILSGTQFTLGILVNCFI) form a helical membrane-spanning segment. Residues 28–42 (ELVNGSSWFKTKRMS) are Cytoplasmic-facing. Residues 43-63 (LSDFIITTLALLRIILLCIIL) form a helical membrane-spanning segment. At 64 to 94 (TDSFLIEFSPNTHDSGIIMQIIDVSWTFTNH) the chain is on the extracellular side. Residues 95-115 (LSIWLATCLGVLYCLKIASFS) traverse the membrane as a helical segment. Over 116–128 (HPTFLWLKWRVSR) the chain is Cytoplasmic. Residues 129-149 (VMVWMLLGALLLSCGSTASLI) form a helical membrane-spanning segment. Residues 150-186 (NEFKLYSVFRGIEATRNVTEHFRKKRSEYYLIHVLGT) lie on the Extracellular side of the membrane. An N-linked (GlcNAc...) asparagine glycan is attached at asparagine 166. Residues 187 to 207 (LWYLPPLIVSLASYSLLIFSL) form a helical membrane-spanning segment. The Cytoplasmic portion of the chain corresponds to 208 to 234 (GRHTRQMLQNGTSSRDPTTEAHKRAIR). The helical transmembrane segment at 235-255 (IILSFFFLFLLYFLAFLIASF) threads the bilayer. The Extracellular portion of the chain corresponds to 256 to 266 (GNFLPKTKMAK). Residues 267 to 287 (MIGEVMTMFYPAGHSFILILG) traverse the membrane as a helical segment. The Cytoplasmic portion of the chain corresponds to 288–316 (NSKLKQTFVVMLRCESGHLKPGSKGPIFS).

The protein belongs to the G-protein coupled receptor T2R family. In terms of tissue distribution, expressed in subsets of taste receptor cells of the tongue and palate epithelium and exclusively in gustducin-positive cells. Expressed in the antrum and fundus (part of the stomach), duodenum and in gastric endocrine cells.

It localises to the membrane. Its function is as follows. Gustducin-coupled receptor implicated in the perception of bitter compounds in the oral cavity and the gastrointestinal tract. Signals through PLCB2 and the calcium-regulated cation channel TRPM5. This chain is Taste receptor type 2 member 3 (TAS2R3), found in Homo sapiens (Human).